The following is a 93-amino-acid chain: Large ribosomal subunit protein bL31B (93 aa).

It belongs to the bacterial ribosomal protein bL31 family. Type B subfamily. In terms of assembly, part of the 50S ribosomal subunit.

The sequence is that of Large ribosomal subunit protein bL31B from Pseudomonas syringae pv. tomato (strain ATCC BAA-871 / DC3000).